A 300-amino-acid chain; its full sequence is Cation-efflux pump FieF (300 aa).

4 helical membrane-spanning segments follow: residues 12 to 32 (AAIA…FAWW), 39 to 59 (ILAA…NLLV), 82 to 102 (AALA…LTGI), and 114 to 134 (PGVG…LVSF). Residues aspartate 45 and aspartate 49 each coordinate Zn(2+). Zn(2+) is bound by residues histidine 153 and aspartate 157. Transmembrane regions (helical) follow at residues 156 to 176 (SDVM…YGWH) and 178 to 198 (ADAL…LRMG).

It belongs to the cation diffusion facilitator (CDF) transporter (TC 2.A.4) family. FieF subfamily. In terms of assembly, homodimer.

It is found in the cell inner membrane. The catalysed reaction is Zn(2+)(in) + H(+)(out) = Zn(2+)(out) + H(+)(in). It catalyses the reaction Cd(2+)(in) + H(+)(out) = Cd(2+)(out) + H(+)(in). It carries out the reaction Fe(2+)(in) + H(+)(out) = Fe(2+)(out) + H(+)(in). Divalent metal cation transporter which exports Zn(2+), Cd(2+) and possibly Fe(2+). May be involved in zinc and iron detoxification by efflux. The polypeptide is Cation-efflux pump FieF (Shigella boydii serotype 18 (strain CDC 3083-94 / BS512)).